Consider the following 280-residue polypeptide: Elongation factor Ts (280 aa).

Positions 79 to 82 are involved in Mg(2+) ion dislocation from EF-Tu; that stretch reads TDFV.

Belongs to the EF-Ts family.

Its subcellular location is the cytoplasm. Associates with the EF-Tu.GDP complex and induces the exchange of GDP to GTP. It remains bound to the aminoacyl-tRNA.EF-Tu.GTP complex up to the GTP hydrolysis stage on the ribosome. The protein is Elongation factor Ts of Vibrio cholerae serotype O1 (strain ATCC 39541 / Classical Ogawa 395 / O395).